The following is an 856-amino-acid chain: Dual specificity protein kinase TTK (856 aa).

M1 is subject to N-acetylmethionine. T32 is modified (phosphothreonine). S36, S277, and S342 each carry phosphoserine. T380 carries the post-translational modification Phosphothreonine. A phosphoserine mark is found at S383, S435, and S454. The 267-residue stretch at 524 to 790 (YSILKQIGSG…IPELLTHPYV (267 aa)) folds into the Protein kinase domain. ATP-binding positions include 530 to 538 (IGSGGSSKV) and K552. The active-site Proton acceptor is the D646. S820 bears the Phosphoserine mark. Residues 837–856 (CGEGQDSSSSKTFDKKRERK) are disordered.

The protein belongs to the protein kinase superfamily. Ser/Thr protein kinase family. In terms of assembly, interacts with TPR; the interactions occurs in a microtubule-independent manner. Interacts with MAD1L1 and MAD2L1. In terms of processing, autophosphorylated. Present in rapidly proliferating cell lines; high levels in testis, bone marrow, spleen and thymus. Low levels in brain, heart, lung and kidney.

The catalysed reaction is L-seryl-[protein] + ATP = O-phospho-L-seryl-[protein] + ADP + H(+). It carries out the reaction L-threonyl-[protein] + ATP = O-phospho-L-threonyl-[protein] + ADP + H(+). It catalyses the reaction L-tyrosyl-[protein] + ATP = O-phospho-L-tyrosyl-[protein] + ADP + H(+). Inhibited by the ATP-competitive kinase inhibitor, SP600125. In terms of biological role, involved in mitotic spindle assembly checkpoint signaling, a process that delays anaphase until chromosomes are bioriented on the spindle, and in the repair of incorrect mitotic kinetochore-spindle microtubule attachments. Phosphorylates MAD1L1 to promote the mitotic spindle assembly checkpoint. Phosphorylates CDCA8/Borealin leading to enhanced AURKB activity at the kinetochore. Phosphorylates SKA3 at 'Ser-34' leading to dissociation of the SKA complex from microtubules and destabilization of microtubule-kinetochore attachments. Phosphorylates KNL1, KNTC1 and autophosphorylates. Phosphorylates MCRS1 which enhances recruitment of KIF2A to the minus end of spindle microtubules and promotes chromosome alignment. In Mus musculus (Mouse), this protein is Dual specificity protein kinase TTK (Ttk).